A 250-amino-acid polypeptide reads, in one-letter code: NAD(P)H-quinone oxidoreductase subunit S, chloroplastic (250 aa).

The transit peptide at 1-48 (MATSSITIPTIRTPIHRSKFLGQTHQFSTVNRSVFPPPKQQSKLYQVK) directs the protein to the chloroplast. A Glycyl lysine isopeptide (Lys-Gly) (interchain with G-Cter in ubiquitin) cross-link involves residue K52. Composition is skewed to basic and acidic residues over residues 76 to 94 (QRNI…NETE) and 106 to 115 (VPEDGFEKEM). Disordered regions lie at residues 76 to 163 (QRNI…KPKA) and 222 to 250 (REKG…EAAP). The span at 136–146 (NPPPPPPPPPA) shows a compositional bias: pro residues.

Part of the chloroplast NDH complex, composed of a mixture of chloroplast and nucleus encoded subunits. Component of the electron donor-binding subcomplex, at least composed of NDHS, NDHT and NDHU. Interacts with the NDH subcomplex A via the protein NDHT and NDHU. In terms of processing, arg-193 is the critical site for the high affinity binding of NDH to ferredoxin.

Its subcellular location is the plastid. The protein localises to the chloroplast thylakoid membrane. It catalyses the reaction a plastoquinone + NADH + (n+1) H(+)(in) = a plastoquinol + NAD(+) + n H(+)(out). It carries out the reaction a plastoquinone + NADPH + (n+1) H(+)(in) = a plastoquinol + NADP(+) + n H(+)(out). NDH shuttles electrons from NAD(P)H:plastoquinone, via FMN and iron-sulfur (Fe-S) centers, to quinones in the photosynthetic chain and possibly in a chloroplast respiratory chain. The immediate electron acceptor for the enzyme in this species is believed to be plastoquinone. Couples the redox reaction to proton translocation, and thus conserves the redox energy in a proton gradient. Required for the efficient operation of ferredoxin-dependent plastoquinone reduction. Forms the electron donor-binding subcomplex in association with the NDHT and NDHU subunits. This chain is NAD(P)H-quinone oxidoreductase subunit S, chloroplastic, found in Arabidopsis thaliana (Mouse-ear cress).